The primary structure comprises 546 residues: MLRGPRCLYIYLFFVFLPFSFCYIRNNDNRFVYIVKSIRKGPNIKLRLTKDEKPNIDNHIIDYFKNVREHFPFFKENKSLIYFDSAATTHKPSCVIEKMSEFYKKENSNIHRGIYKLSHNATNNYEKVRETIKEYINCEKNDNIIFTNGSTYGLNVVCKMMIEEIIKKEEDEIYLSYMEHHSNIIPWQEYINKEKKGRIKYVPLNKSGYINIKKLISNMNINTKVISICHASNVIGNIQNIEKIIKKIKNVYPHIIIIIDASQSFAHIKYDIKKMKKNKSCPDILITSGHKFCASLGTGFIFINKELSSKYKFKPLLYGSNIITNVSKYKSKFVTSLSELLETGTQNIPGILSMGISLEFFKKINWNYVYQYEMYLYDLFIYYMNKYMKNHFVQLPNLNLSYKKENINYKSHMQTHPPVHKYNDEQNFTNDHNITQSKQTKSIHSQHDTFKIYTHDTRKYGLKKIGILPLWSNTFSSFDLVTFLDFKNICIRAGHHCASLLHKYYLKVPDTSRISIYFYNTPQEIKYLAQQIASTSFMLNEMKNEK.

An N-terminal signal peptide occupies residues 1-22 (MLRGPRCLYIYLFFVFLPFSFC). N6-(pyridoxal phosphate)lysine is present on K291. Catalysis depends on C497, which acts as the Cysteine persulfide intermediate.

It belongs to the class-V pyridoxal-phosphate-dependent aminotransferase family. Csd subfamily. In terms of assembly, monomer. Interacts with SufE; interaction enhances cysteine desulfurase activity of SufS. Pyridoxal 5'-phosphate is required as a cofactor. Proteolytically cleaved.

The protein localises to the plastid. It localises to the apicoplast. The catalysed reaction is (sulfur carrier)-H + L-cysteine = (sulfur carrier)-SH + L-alanine. The protein operates within cofactor biosynthesis; iron-sulfur cluster biosynthesis. Its function is as follows. Catalyzes sulfur activation and mobilization in sulfur mobilization (SUF) pathway for iron-sulfur (Fe-S) cluster biogenesis. Active when in complex with a partner protein SufE. Required for apicoplast maintenance. Plays a role in the development of sporozoites in oocysts in mosquitoes. May provide sulfur for MNMA-mediated tRNA modifications. This chain is Cysteine desulfurase SufS, found in Plasmodium falciparum (isolate 3D7).